Reading from the N-terminus, the 798-residue chain is Suppressor of spindle checkpoint defect 1 (798 aa).

Residues 339 to 359 (ESIQQSQVNVDDMCNRIANME) are a coiled coil.

It belongs to the APC5 family. As to quaternary structure, the APC/C complex is probably composed of at least 12 subunits: apc-2, apc-10, apc-11, cdc-26, emb-1, emb-27, emb-30, mat-1, mat-2, mat-3, such-1 and gfi-3. As to expression, expressed in head neurons, vulval precursor cells and in mature sperm stored in the spermatheca.

It participates in protein modification; protein ubiquitination. Functionally, probable component of the anaphase promoting complex/cyclosome (APC/C), a cell cycle-regulated E3 ubiquitin ligase that controls progression through mitosis and the G1 phase of the cell cycle. The APC/C complex acts by mediating ubiquitination and subsequent degradation of target proteins. Required for the metaphase to anaphase transition in meiosis. Plays a role in the segregation of DNA and centrioles during meiosis in male germ cells. This chain is Suppressor of spindle checkpoint defect 1, found in Caenorhabditis elegans.